Here is a 121-residue protein sequence, read N- to C-terminus: MAKITKEQFIESLKEMTIKEVMELVDALKEEFGVDPSAVAVAATPVATEEVKTEVKLTLKAAGQQKVAVIKVVKDLLGLSLMDAKKLVDAAPSVLKEAIKPEEAEEYKAKLVAAGAEVSID.

Belongs to the bacterial ribosomal protein bL12 family. Homodimer. Part of the ribosomal stalk of the 50S ribosomal subunit. Forms a multimeric L10(L12)X complex, where L10 forms an elongated spine to which 2 to 4 L12 dimers bind in a sequential fashion. Binds GTP-bound translation factors.

In terms of biological role, forms part of the ribosomal stalk which helps the ribosome interact with GTP-bound translation factors. Is thus essential for accurate translation. The polypeptide is Large ribosomal subunit protein bL12 (Mesomycoplasma hyopneumoniae (strain 7448) (Mycoplasma hyopneumoniae)).